A 235-amino-acid polypeptide reads, in one-letter code: Thiamine import ATP-binding protein ThiQ (235 aa).

Positions 2–230 (LKLIDITWLY…QASASALLGI (229 aa)) constitute an ABC transporter domain. Residue 32–39 (GPSGAGKS) coordinates ATP.

This sequence belongs to the ABC transporter superfamily. Thiamine importer (TC 3.A.1.19.1) family. The complex is composed of two ATP-binding proteins (ThiQ), two transmembrane proteins (ThiP) and a solute-binding protein (ThiB).

It is found in the cell inner membrane. The catalysed reaction is thiamine(out) + ATP + H2O = thiamine(in) + ADP + phosphate + H(+). Its function is as follows. Part of the ABC transporter complex ThiBPQ involved in thiamine import. Responsible for energy coupling to the transport system. Is also involved in thiamine pyrophosphate (TPP) transport. The sequence is that of Thiamine import ATP-binding protein ThiQ from Salmonella typhimurium (strain LT2 / SGSC1412 / ATCC 700720).